The primary structure comprises 503 residues: Aspartyl/glutamyl-tRNA(Asn/Gln) amidotransferase subunit B (503 aa).

It belongs to the GatB/GatE family. GatB subfamily. Heterotrimer of A, B and C subunits.

It carries out the reaction L-glutamyl-tRNA(Gln) + L-glutamine + ATP + H2O = L-glutaminyl-tRNA(Gln) + L-glutamate + ADP + phosphate + H(+). It catalyses the reaction L-aspartyl-tRNA(Asn) + L-glutamine + ATP + H2O = L-asparaginyl-tRNA(Asn) + L-glutamate + ADP + phosphate + 2 H(+). Its function is as follows. Allows the formation of correctly charged Asn-tRNA(Asn) or Gln-tRNA(Gln) through the transamidation of misacylated Asp-tRNA(Asn) or Glu-tRNA(Gln) in organisms which lack either or both of asparaginyl-tRNA or glutaminyl-tRNA synthetases. The reaction takes place in the presence of glutamine and ATP through an activated phospho-Asp-tRNA(Asn) or phospho-Glu-tRNA(Gln). The chain is Aspartyl/glutamyl-tRNA(Asn/Gln) amidotransferase subunit B from Jannaschia sp. (strain CCS1).